Here is a 394-residue protein sequence, read N- to C-terminus: Aspergillopepsin-1 (394 aa).

The first 20 residues, 1–20, serve as a signal peptide directing secretion; the sequence is MVVFSKVTAAVFGLATIASA. A propeptide spans 21–69 (activation peptide); the sequence is APAPPTRKGFTVQQQARPAQKKQVNLPAMYAHALTKFGGSVPESVKVAA. Positions 85–391 constitute a Peptidase A1 domain; that stretch reads YLTPVNVGGT…DSEGPRLGFA (307 aa). Active-site residues include D101 and D283. An intrachain disulfide couples C319 to C354.

It belongs to the peptidase A1 family. Monomer.

It localises to the secreted. It carries out the reaction Hydrolysis of proteins with broad specificity. Generally favors hydrophobic residues in P1 and P1', but also accepts Lys in P1, which leads to activation of trypsinogen. Does not clot milk.. Its function is as follows. Secreted aspartic endopeptidase that allows assimilation of proteinaceous substrates. The scissile peptide bond is attacked by a nucleophilic water molecule activated by two aspartic residues in the active site. Shows a broad primary substrate specificity. Favors hydrophobic residues at the P1 and P1' positions, but also accepts a lysine residue in the P1 position, leading to the activation of trypsinogen and chymotrypsinogen A. In Aspergillus clavatus (strain ATCC 1007 / CBS 513.65 / DSM 816 / NCTC 3887 / NRRL 1 / QM 1276 / 107), this protein is Aspergillopepsin-1 (pepA).